Consider the following 515-residue polypeptide: Putative acetolactate synthase large subunit IlvX (515 aa).

Glu48 contributes to the thiamine diphosphate binding site. FAD is bound by residues Phe249 to Arg269 and Asp283 to Asp302. The thiamine pyrophosphate binding stretch occupies residues Thr357–Ala436. Asp407 and Asn434 together coordinate Mg(2+).

This sequence belongs to the TPP enzyme family. Heterodimer of large catalytic subunit and small regulatory subunit. Mg(2+) is required as a cofactor. Thiamine diphosphate serves as cofactor.

It carries out the reaction 2 pyruvate + H(+) = (2S)-2-acetolactate + CO2. Its pathway is amino-acid biosynthesis; L-isoleucine biosynthesis; L-isoleucine from 2-oxobutanoate: step 1/4. It functions in the pathway amino-acid biosynthesis; L-valine biosynthesis; L-valine from pyruvate: step 1/4. Functionally, catalyzes the conversion of 2 pyruvate molecules into acetolactate in the first common step of the biosynthetic pathway of the branched-amino acids such as leucine, isoleucine, and valine. The sequence is that of Putative acetolactate synthase large subunit IlvX (ilvX) from Mycobacterium tuberculosis (strain ATCC 25618 / H37Rv).